The chain runs to 289 residues: ATP synthase gamma chain (289 aa).

Belongs to the ATPase gamma chain family. In terms of assembly, F-type ATPases have 2 components, CF(1) - the catalytic core - and CF(0) - the membrane proton channel. CF(1) has five subunits: alpha(3), beta(3), gamma(1), delta(1), epsilon(1). CF(0) has three main subunits: a, b and c.

The protein localises to the cell membrane. In terms of biological role, produces ATP from ADP in the presence of a proton gradient across the membrane. The gamma chain is believed to be important in regulating ATPase activity and the flow of protons through the CF(0) complex. This chain is ATP synthase gamma chain, found in Lactococcus lactis subsp. cremoris (strain MG1363).